Here is a 469-residue protein sequence, read N- to C-terminus: 1-aminocyclopropane-1-carboxylate synthase 3 (469 aa).

At K272 the chain carries N6-(pyridoxal phosphate)lysine. Residues 432–452 form a disordered region; sequence APNATNHQNQQQSNANSKKKS. Residues 437–447 show a composition bias toward low complexity; that stretch reads NHQNQQQSNAN.

This sequence belongs to the class-I pyridoxal-phosphate-dependent aminotransferase family. As to quaternary structure, homodimer. Pyridoxal 5'-phosphate is required as a cofactor.

It carries out the reaction S-adenosyl-L-methionine = 1-aminocyclopropane-1-carboxylate + S-methyl-5'-thioadenosine + H(+). It functions in the pathway alkene biosynthesis; ethylene biosynthesis via S-adenosyl-L-methionine; ethylene from S-adenosyl-L-methionine: step 1/2. Functionally, catalyzes the formation of 1-aminocyclopropane-1-carboxylate, a direct precursor of ethylene in higher plants. The sequence is that of 1-aminocyclopropane-1-carboxylate synthase 3 (ACS3) from Solanum lycopersicum (Tomato).